We begin with the raw amino-acid sequence, 569 residues long: Falcipain-1 (569 aa).

Residues 1 to 35 lie on the Cytoplasmic side of the membrane; it reads MVAIKEMKEFAFARPSLVETLNKKKKFLKKKEKRT. A propeptide spans 1-332 (activation peptide); the sequence is MVAIKEMKEF…KRNEKDIFSK (332 aa). Residues 36–56 traverse the membrane as a helical; Signal-anchor for type II membrane protein segment; sequence FVLSIYAFITFIIFCIGILYF. Over 57–569 the chain is Lumenal; that stretch reads TNKSSAHNNN…IGEEVFYPIL (513 aa). N58, N98, N121, and N127 each carry an N-linked (GlcNAc...) asparagine glycan. Positions 97 to 118 are disordered; it reads LNESSNEEDEEKYTLNSETYNN. 3 disulfide bridges follow: C354-C395, C388-C428, and C413-C433. C357 is a catalytic residue. 2 N-linked (GlcNAc...) asparagine glycosylation sites follow: N479 and N487. A disulfide bridge links C482 with C558. Active-site residues include H488 and N533.

The protein belongs to the peptidase C1 family. Contains disulfide bonds.

The protein localises to the membrane. It localises to the cytoplasmic granule. Its function is as follows. Cysteine protease. In the mosquito midgut, required for parasite development. This Plasmodium falciparum (isolate 3D7) protein is Falcipain-1.